Here is a 215-residue protein sequence, read N- to C-terminus: Ribonuclease T (215 aa).

One can recognise an Exonuclease domain in the interval 20–194 (VVIDVETAGF…YDTLQTAKLF (175 aa)). D23, E25, H181, and D186 together coordinate Mg(2+). The active-site Proton donor/acceptor is the H181.

Belongs to the RNase T family. Homodimer. Mg(2+) serves as cofactor.

Its function is as follows. Trims short 3' overhangs of a variety of RNA species, leaving a one or two nucleotide 3' overhang. Responsible for the end-turnover of tRNA: specifically removes the terminal AMP residue from uncharged tRNA (tRNA-C-C-A). Also appears to be involved in tRNA biosynthesis. The protein is Ribonuclease T of Yersinia pseudotuberculosis serotype O:1b (strain IP 31758).